The primary structure comprises 75 residues: Small ribosomal subunit protein bS18 (75 aa).

The protein belongs to the bacterial ribosomal protein bS18 family. As to quaternary structure, part of the 30S ribosomal subunit. Forms a tight heterodimer with protein bS6.

Its function is as follows. Binds as a heterodimer with protein bS6 to the central domain of the 16S rRNA, where it helps stabilize the platform of the 30S subunit. The polypeptide is Small ribosomal subunit protein bS18 (Cereibacter sphaeroides (strain ATCC 17029 / ATH 2.4.9) (Rhodobacter sphaeroides)).